A 152-amino-acid chain; its full sequence is uncharacterized protein (152 aa).

This is an uncharacterized protein from Acanthamoeba polyphaga (Amoeba).